The sequence spans 2090 residues: Ninein (2090 aa).

EF-hand domains lie at glutamine 8–glutamate 43 and leucine 42–arginine 77. Serine 152 is subject to Phosphoserine. EF-hand domains are found at residues tryptophan 182–glutamine 217 and valine 219–serine 252. Glycine 245–serine 252 is a GTP binding site. Serine 269 bears the Phosphoserine mark. Aspartate 300 to histidine 304 lines the GTP pocket. The EF-hand 5 domain occupies glutamate 317 to valine 352. Residues isoleucine 357–leucine 570 are a coiled coil. Arginine 420–aspartate 423 serves as a coordination point for GTP. The tract at residues asparagine 574 to serine 595 is disordered. Coiled coils occupy residues leucine 625 to serine 1027, leucine 1068 to glutamate 1099, serine 1181 to glutamine 1341, and glutamine 1441 to lysine 1816. The tract at residues lysine 802–methionine 1505 is important for interaction with CEP170. The tract at residues valine 1152 to arginine 1190 is disordered. Serine 1550 and serine 1837 each carry phosphoserine. Coiled-coil stretches lie at residues glutamine 1854–leucine 1885 and alanine 1922–leucine 2067.

In terms of assembly, homooligomer. Interacts with GSK3B/GSK3-beta via its C-terminal domain. Interacts with C14ORF166, such interaction may prevent its phosphorylation by GSK3B. Interacts with AUNIP (via N-terminus). Identified in a complex with AUNIP and AURKA. Interacts with CCDC120. Interacts (via C-terminus) with CEP250. Interacts with CEP170. Interacts with the gamma-tubulin ring complex component TUBGCP3. Interacts with gamma-tubulin. Isoform 6 does not interact with CEP170 or CEP250. In terms of processing, phosphorylated by AURKA/Aurora kinase A and PKA kinases but not CK2 or AURKB/ Aurora kinase B. As to expression, ubiquitous. Highly expressed in heart and skeletal muscle. Isoform 1 is more expressed than isoform 5.

It localises to the cytoplasm. Its subcellular location is the cytoskeleton. The protein resides in the microtubule organizing center. It is found in the centrosome. The protein localises to the centriole. Functionally, centrosomal protein required in the positioning and anchorage of the microtubule minus-end in epithelial cells. May also act as a centrosome maturation factor. May play a role in microtubule nucleation, by recruiting the gamma-tubulin ring complex to the centrosome. Overexpression does not perturb nucleation or elongation of microtubules but suppresses release of microtubules. Required for centriole organization and microtubule anchoring at the mother centriole. In Homo sapiens (Human), this protein is Ninein (NIN).